We begin with the raw amino-acid sequence, 184 residues long: Photosystem I assembly protein Ycf4 (184 aa).

A run of 2 helical transmembrane segments spans residues 20–40 and 64–84; these read GNFFWAFILFLGSLGFLVVGI and IVMSFYGIAGLFISSYLWCTI.

The protein belongs to the Ycf4 family.

The protein localises to the plastid. It localises to the chloroplast thylakoid membrane. Seems to be required for the assembly of the photosystem I complex. This is Photosystem I assembly protein Ycf4 from Citrus sinensis (Sweet orange).